The chain runs to 232 residues: V-type ATP synthase subunit E (232 aa).

Belongs to the V-ATPase E subunit family.

Produces ATP from ADP in the presence of a proton gradient across the membrane. This is V-type ATP synthase subunit E (atpE) from Treponema pallidum (strain Nichols).